Reading from the N-terminus, the 197-residue chain is Phospholipid hydroperoxide glutathione peroxidase (197 aa).

Position 40 is a phosphoserine (serine 40). Selenocysteine 73 is a catalytic residue. Residue selenocysteine 73 is a non-standard amino acid, selenocysteine.

The protein belongs to the glutathione peroxidase family. As to quaternary structure, monomer. Has a tendency to form higher mass oligomers. Interacts with FUNDC1; this interaction promotes GPX4 recruitment into mitochondria through TOM/TIM complex where it is degraded by mitophagy. As to expression, expressed in testis. Also expressed in liver, lung, kidney and spinal cord.

The protein resides in the mitochondrion. It is found in the cytoplasm. It catalyses the reaction a hydroperoxy polyunsaturated fatty acid + 2 glutathione = a hydroxy polyunsaturated fatty acid + glutathione disulfide + H2O. The catalysed reaction is 2 glutathione + H2O2 = glutathione disulfide + 2 H2O. It carries out the reaction tert-butyl hydroperoxide + 2 glutathione = tert-butanol + glutathione disulfide + H2O. The enzyme catalyses cumene hydroperoxide + 2 glutathione = 2-phenylpropan-2-ol + glutathione disulfide + H2O. It catalyses the reaction (9S)-hydroperoxy-(10E,12Z)-octadecadienoate + 2 glutathione = (9S)-hydroxy-(10E,12Z)-octadecadienoate + glutathione disulfide + H2O. The catalysed reaction is (13S)-hydroperoxy-(9Z,11E)-octadecadienoate + 2 glutathione = (13S)-hydroxy-(9Z,11E)-octadecadienoate + glutathione disulfide + H2O. It carries out the reaction (5S)-hydroperoxy-(6E,8Z,11Z,14Z)-eicosatetraenoate + 2 glutathione = (5S)-hydroxy-(6E,8Z,11Z,14Z)-eicosatetraenoate + glutathione disulfide + H2O. The enzyme catalyses (12R)-hydroperoxy-(5Z,8Z,10E,14Z)-eicosatetraenoate + 2 glutathione = (12R)-hydroxy-(5Z,8Z,10E,14Z)-eicosatetraenoate + glutathione disulfide + H2O. It catalyses the reaction (12S)-hydroperoxy-(5Z,8Z,10E,14Z)-eicosatetraenoate + 2 glutathione = (12S)-hydroxy-(5Z,8Z,10E,14Z)-eicosatetraenoate + glutathione disulfide + H2O. The catalysed reaction is (15S)-hydroperoxy-(5Z,8Z,11Z,13E)-eicosatetraenoate + 2 glutathione = (15S)-hydroxy-(5Z,8Z,11Z,13E)-eicosatetraenoate + glutathione disulfide + H2O. It carries out the reaction (5S)-hydroperoxy-(6E,8Z,11Z,14Z,17Z)-eicosapentaenoate + 2 glutathione = (5S)-hydroxy-(6E,8Z,11Z,14Z,17Z)-eicosapentaenoate + glutathione disulfide + H2O. The enzyme catalyses (12S)-hydroperoxy-(5Z,8Z,10E,14Z,17Z)-eicosapentaenoate + 2 glutathione = (12S)-hydroxy-(5Z,8Z,10E,14Z,17Z)-eicosapentaenoate + glutathione disulfide + H2O. It catalyses the reaction (15S)-hydroperoxy-(5Z,8Z,11Z,13E,17Z)-eicosapentaenoate + 2 glutathione = (15S)-hydroxy-(5Z,8Z,11Z,13E,17Z)-eicosapentaenoate + glutathione disulfide + H2O. The catalysed reaction is (15S)-hydroperoxy-(11Z,13E)-eicosadienoate + 2 glutathione = (15S)-hydroxy-(11Z,13E)-eicosadienoate + glutathione disulfide + H2O. It carries out the reaction (17S)-hydroperoxy-(4Z,7Z,10Z,13Z,15E,19Z)-docosahexaenoate + 2 glutathione = (17S)-hydroxy-(4Z,7Z,10Z,13Z,15E,19Z)-docosahexaenoate + glutathione disulfide + H2O. The enzyme catalyses a hydroperoxy-1,2-diacyl-glycero-3-phosphocholine + 2 glutathione = a hydroxy-1,2-diacyl-glycero-3-phosphocholine + glutathione disulfide + H2O. Functionally, essential antioxidant peroxidase that directly reduces phospholipid hydroperoxide even if they are incorporated in membranes and lipoproteins. Can also reduce fatty acid hydroperoxide, cholesterol hydroperoxide and thymine hydroperoxide. Plays a key role in protecting cells from oxidative damage by preventing membrane lipid peroxidation. Required to prevent cells from ferroptosis, a non-apoptotic cell death resulting from an iron-dependent accumulation of lipid reactive oxygen species. The presence of selenocysteine (Sec) versus Cys at the active site is essential for life: it provides resistance to overoxidation and prevents cells against ferroptosis. The presence of Sec at the active site is also essential for the survival of a specific type of parvalbumin-positive interneurons, thereby preventing against fatal epileptic seizures. May be required to protect cells from the toxicity of ingested lipid hydroperoxides. Required for normal sperm development and male fertility. Essential for maturation and survival of photoreceptor cells. Plays a role in a primary T-cell response to viral and parasitic infection by protecting T-cells from ferroptosis and by supporting T-cell expansion. Plays a role of glutathione peroxidase in platelets in the arachidonic acid metabolism. Reduces hydroperoxy ester lipids formed by a 15-lipoxygenase that may play a role as down-regulator of the cellular 15-lipoxygenase pathway. Can also reduce small soluble hydroperoxides such as H2O2, cumene hydroperoxide and tert-butyl hydroperoxide. This Callithrix jacchus (White-tufted-ear marmoset) protein is Phospholipid hydroperoxide glutathione peroxidase.